The primary structure comprises 512 residues: Kelch repeat protein C2 (512 aa).

The BTB domain occupies 2 to 67; sequence ESVIFSINGE…MRWKKINITV (66 aa). A BACK domain is found at 102-176; sequence CIRMFNFSKR…LLKWIHKNPN (75 aa). 6 Kelch repeats span residues 216 to 261, 262 to 307, 309 to 354, 356 to 403, 405 to 449, and 452 to 498; these read IKHN…LYNC, LYII…VNDG, LYVI…FVND, IYVM…EYDG, IYAI…SCGD, and LIIA…THKS.

The protein belongs to the poxviruses Kelch family.

The protein is Kelch repeat protein C2 of Camelus.